The following is a 95-amino-acid chain: Aspartyl/glutamyl-tRNA(Asn/Gln) amidotransferase subunit C (95 aa).

It belongs to the GatC family. Heterotrimer of A, B and C subunits.

It catalyses the reaction L-glutamyl-tRNA(Gln) + L-glutamine + ATP + H2O = L-glutaminyl-tRNA(Gln) + L-glutamate + ADP + phosphate + H(+). The catalysed reaction is L-aspartyl-tRNA(Asn) + L-glutamine + ATP + H2O = L-asparaginyl-tRNA(Asn) + L-glutamate + ADP + phosphate + 2 H(+). In terms of biological role, allows the formation of correctly charged Asn-tRNA(Asn) or Gln-tRNA(Gln) through the transamidation of misacylated Asp-tRNA(Asn) or Glu-tRNA(Gln) in organisms which lack either or both of asparaginyl-tRNA or glutaminyl-tRNA synthetases. The reaction takes place in the presence of glutamine and ATP through an activated phospho-Asp-tRNA(Asn) or phospho-Glu-tRNA(Gln). The sequence is that of Aspartyl/glutamyl-tRNA(Asn/Gln) amidotransferase subunit C from Rhizobium leguminosarum bv. trifolii (strain WSM2304).